The chain runs to 674 residues: Probable protein phosphatase 2C 66 (674 aa).

At Ser-125 the chain carries Phosphoserine. 2 disordered regions span residues 153-175 (YSGPIESTKKTEKEKPKKIRKKP) and 202-247 (KSVI…KQSM). Positions 244-665 (KQSMNSVLDV…DDVSVIVISL (422 aa)) constitute a PPM-type phosphatase domain. Residues Asp-282 and Gly-283 each contribute to the Mn(2+) site. Basic and acidic residues predominate over residues 373–384 (NNKTKSDNRCDQ). The segment at 373 to 392 (NNKTKSDNRCDQKGSNSTTT) is disordered. The Mn(2+) site is built by Asp-593 and Asp-656.

Belongs to the PP2C family. Requires Mg(2+) as cofactor. The cofactor is Mn(2+). As to expression, expressed at low level in seedlings, roots, leaves, stems, young inflorescences, flowers and siliques.

The protein resides in the nucleus. It carries out the reaction O-phospho-L-seryl-[protein] + H2O = L-seryl-[protein] + phosphate. The catalysed reaction is O-phospho-L-threonyl-[protein] + H2O = L-threonyl-[protein] + phosphate. This Arabidopsis thaliana (Mouse-ear cress) protein is Probable protein phosphatase 2C 66 (PLL2).